A 405-amino-acid chain; its full sequence is Putative colanic acid biosynthesis glycosyl transferase WcaC (405 aa).

It functions in the pathway slime biogenesis; slime polysaccharide biosynthesis. The sequence is that of Putative colanic acid biosynthesis glycosyl transferase WcaC (wcaC) from Escherichia coli (strain K12).